Consider the following 312-residue polypeptide: Pantothenate kinase (312 aa).

An ATP-binding site is contributed by 97–104 (GSVAVGKS).

The protein belongs to the prokaryotic pantothenate kinase family.

It localises to the cytoplasm. It catalyses the reaction (R)-pantothenate + ATP = (R)-4'-phosphopantothenate + ADP + H(+). Its pathway is cofactor biosynthesis; coenzyme A biosynthesis; CoA from (R)-pantothenate: step 1/5. The sequence is that of Pantothenate kinase from Mycobacterium sp. (strain JLS).